The sequence spans 392 residues: Metallophosphoesterase 1 (392 aa).

The helical transmembrane segment at 25–45 (KLAALVFAVVLFCEFLIYYLV) threads the bilayer. Residues D73, D115, N153, H246, H300, and H302 each contribute to the a divalent metal cation site. A helical membrane pass occupies residues 352–372 (DTVLATYCVAAGLLVVLILVH).

The protein belongs to the metallophosphoesterase superfamily. MPPE1 family. Interacts with GPI-anchor proteins (via the GPI portion). Interacts with TMED10. It depends on Mn(2+) as a cofactor.

The protein resides in the endoplasmic reticulum-Golgi intermediate compartment membrane. Functionally, metallophosphoesterase that catalyzes the removal of a side-chain ethanolamine-phosphate (EtNP) from the second mannose of the GPI-anchor protein intermediate. Participates in the glycan remodeling steps of GPI-anchor maturation to allow an efficient transport of GPI-anchor proteins from the endoplasmic reticulum to the Golgi. This Ailuropoda melanoleuca (Giant panda) protein is Metallophosphoesterase 1.